Reading from the N-terminus, the 284-residue chain is MAALVRAAVVRSQCRQLWRLFPRGHGLRDVAERPRPEEACSCLRSRAFSAGPPPPGAGPEPKGGQAGSHRPKPGPVSWKSLALTFAIGGSLLAGMKYFKKEKIEKLEKQRHRSIGKPLLGGPFSLTTHNGEPKTDKDYLGQWVLIYFGFTHCPDICPEELEKMIEVVEEIDSIPSLPNLTPLFITIDPERDTKEAIATYVKEFSPKLVGLTGTKEEIDGVARAYRVYYSPGPKDEDEDYIVDHTIIMYLIGPDGEFLDYFGQNKKKAEIAGSIAAHMRSHMKKR.

The tract at residues 46–73 (RAFSAGPPPPGAGPEPKGGQAGSHRPKP) is disordered. The helical transmembrane segment at 81–98 (LALTFAIGGSLLAGMKYF) threads the bilayer. At 99-284 (KKEKIEKLEK…AHMRSHMKKR (186 aa)) the chain is on the mitochondrial intermembrane side. The interval 101-114 (EKIEKLEKQRHRSI) is important for dimerization. Positions 152, 156, and 243 each coordinate Cu cation. The cysteines at positions 152 and 156 are disulfide-linked.

This sequence belongs to the SCO1/2 family. In terms of assembly, homodimer. Interacts with COA6. Found in a complex with TMEM177, COX20, COA6, MT-CO2/COX2, COX18 and SCO2. Interacts with TMEM177 in a COX20-dependent manner. Interacts with COX20 in a MT-CO2/COX2- and COX18-dependent manner. Interacts with COX16.

It localises to the mitochondrion. Its subcellular location is the mitochondrion inner membrane. In terms of biological role, copper metallochaperone essential for the maturation of cytochrome c oxidase subunit II (MT-CO2/COX2). Not required for the synthesis of MT-CO2/COX2 but plays a crucial role in stabilizing MT-CO2/COX2 during its subsequent maturation. Involved in transporting copper to the Cu(A) site on MT-CO2/COX2. Plays an important role in the regulation of copper homeostasis by controlling the abundance and cell membrane localization of copper transporter CTR1. This is Protein SCO1 homolog, mitochondrial (Sco1) from Mus musculus (Mouse).